Consider the following 230-residue polypeptide: Sugar fermentation stimulation protein homolog (230 aa).

Belongs to the SfsA family.

This chain is Sugar fermentation stimulation protein homolog, found in Clostridium botulinum (strain Okra / Type B1).